A 513-amino-acid chain; its full sequence is Ribonuclease Y (513 aa).

A helical membrane pass occupies residues 6-26; the sequence is YIIIAVVIIIICVILGLYVVD. Residues 203–288 form the KH domain; the sequence is TVHVVNLPND…EMVEKAKKEV (86 aa). The HD domain occupies 329-422; the sequence is VLKHSIEVSH…VQAADAISAA (94 aa).

Belongs to the RNase Y family.

It is found in the cell membrane. In terms of biological role, endoribonuclease that initiates mRNA decay. This is Ribonuclease Y from Clostridium botulinum (strain Loch Maree / Type A3).